We begin with the raw amino-acid sequence, 72 residues long: Translation initiation factor IF-1 (72 aa).

The region spanning 1–72 is the S1-like domain; it reads MAKDDVIEVE…TRGRITYRYK (72 aa). The residue at position 60 (Tyr-60) is a Phosphotyrosine.

The protein belongs to the IF-1 family. As to quaternary structure, component of the 30S ribosomal translation pre-initiation complex which assembles on the 30S ribosome in the order IF-2 and IF-3, IF-1 and N-formylmethionyl-tRNA(fMet); mRNA recruitment can occur at any time during PIC assembly.

It localises to the cytoplasm. Its function is as follows. One of the essential components for the initiation of protein synthesis. Stabilizes the binding of IF-2 and IF-3 on the 30S subunit to which N-formylmethionyl-tRNA(fMet) subsequently binds. Helps modulate mRNA selection, yielding the 30S pre-initiation complex (PIC). Upon addition of the 50S ribosomal subunit IF-1, IF-2 and IF-3 are released leaving the mature 70S translation initiation complex. In Bacillus licheniformis (strain ATCC 14580 / DSM 13 / JCM 2505 / CCUG 7422 / NBRC 12200 / NCIMB 9375 / NCTC 10341 / NRRL NRS-1264 / Gibson 46), this protein is Translation initiation factor IF-1.